The chain runs to 305 residues: tRNA dimethylallyltransferase (305 aa).

12 to 19 (GPTASGKT) is a binding site for ATP. 14–19 (TASGKT) contributes to the substrate binding site. 3 interaction with substrate tRNA regions span residues 37-40 (DSAL), 161-165 (QRLAR), and 242-247 (RCVGYR).

It belongs to the IPP transferase family. Monomer. Requires Mg(2+) as cofactor.

The enzyme catalyses adenosine(37) in tRNA + dimethylallyl diphosphate = N(6)-dimethylallyladenosine(37) in tRNA + diphosphate. Functionally, catalyzes the transfer of a dimethylallyl group onto the adenine at position 37 in tRNAs that read codons beginning with uridine, leading to the formation of N6-(dimethylallyl)adenosine (i(6)A). This Psychromonas ingrahamii (strain DSM 17664 / CCUG 51855 / 37) protein is tRNA dimethylallyltransferase.